We begin with the raw amino-acid sequence, 660 residues long: Transcription activator of gluconeogenesis CHGG_09150 (660 aa).

A compositionally biased stretch (acidic residues) spans 1-12 (MSDSENEYDETD). Residues 1-52 (MSDSENEYDETDQLVKEEDEKMSDQRLTSEGADTSAEPKKKYDPKDPLRPRR) form a disordered region. Basic and acidic residues-rich tracts occupy residues 13-24 (QLVKEEDEKMSD) and 36-49 (AEPKKKYDPKDPLR). Residues 59-87 (CFACQRAHLTCGDERPCQRCIKRNLMESC) constitute a DNA-binding region (zn(2)-C6 fungal-type). Disordered stretches follow at residues 98 to 144 (LHDA…TFFS), 170 to 191 (FANQQSPTSPSFQTSGNPQISG), and 319 to 368 (PTSI…RQSN). The segment covering 129 to 144 (SIQTSEASSNQGTFFS) has biased composition (polar residues). The segment covering 173–184 (QQSPTSPSFQTS) has biased composition (low complexity). Polar residues-rich tracts occupy residues 320–332 (TSIQSPSTDTNSP) and 344–368 (TMATFSTTPGSKPANQQRPSTRQSN). Residues 455–526 (SLLEYEEFMH…NSKARVGLAT (72 aa)) form the PAS domain. Residues 587-613 (APDKDDGTGESSTDGQLPQKDPRNSIL) form a disordered region.

Belongs to the ERT1/acuK family.

It localises to the nucleus. In terms of biological role, transcription factor which regulates nonfermentable carbon utilization. Activator of gluconeogenetic genes. This chain is Transcription activator of gluconeogenesis CHGG_09150, found in Chaetomium globosum (strain ATCC 6205 / CBS 148.51 / DSM 1962 / NBRC 6347 / NRRL 1970) (Soil fungus).